The primary structure comprises 444 residues: 23S rRNA (uracil(1939)-C(5))-methyltransferase RlmD (444 aa).

Residues 5–64 enclose the TRAM domain; that stretch reads KPKLNLTSQTARIVNLSHDGRGIARVNGKATFIQGALPGEVVEFQYTRVKKDFDEGKLLS. 4 residues coordinate [4Fe-4S] cluster: Cys-77, Cys-83, Cys-86, and Cys-166. Residues Gln-276, Phe-305, Asn-310, Glu-326, Asn-353, and Asp-374 each coordinate S-adenosyl-L-methionine. Residue Cys-400 is the Nucleophile of the active site.

It belongs to the class I-like SAM-binding methyltransferase superfamily. RNA M5U methyltransferase family. RlmD subfamily.

The catalysed reaction is uridine(1939) in 23S rRNA + S-adenosyl-L-methionine = 5-methyluridine(1939) in 23S rRNA + S-adenosyl-L-homocysteine + H(+). In terms of biological role, catalyzes the formation of 5-methyl-uridine at position 1939 (m5U1939) in 23S rRNA. The sequence is that of 23S rRNA (uracil(1939)-C(5))-methyltransferase RlmD from Legionella pneumophila (strain Paris).